The following is a 341-amino-acid chain: DNA repair protein XRCC3 (341 aa).

Methionine 1 bears the N-acetylmethionine mark. Residue 107–114 coordinates ATP; it reads GRSSAGKT.

Belongs to the RecA family. RAD51 subfamily. As to quaternary structure, interacts with RAD51C and RAD51. Part of the CX3 complex consisting of RAD51C and XRCC3; the complex has a ring-like structure arranged into a flat disc around a central channel; CX3 can interact with RAD51 in vitro. Forms a complex with FANCD2, BRCA2 and phosphorylated FANCG. Interacts with SWSAP1 and ZSWIM7; involved in homologous recombination repair. Interacts directly with PALB2 which may serve as a scaffold for a HR complex containing PALB2, BRCA2, RAD51C, RAD51 and XRCC3.

Its subcellular location is the nucleus. The protein resides in the cytoplasm. It localises to the perinuclear region. The protein localises to the mitochondrion matrix. Functionally, involved in the homologous recombination repair (HRR) pathway of double-stranded DNA, thought to repair chromosomal fragmentation, translocations and deletions. Part of the RAD21 paralog protein complex CX3 which acts in the BRCA1-BRCA2-dependent HR pathway. Upon DNA damage, CX3 acts downstream of RAD51 recruitment; the complex binds predominantly to the intersection of the four duplex arms of the Holliday junction (HJ) and to junctions of replication forks. Involved in HJ resolution and thus in processing HR intermediates late in the DNA repair process; the function may be linked to the CX3 complex and seems to involve GEN1 during mitotic cell cycle progression. Part of a PALB2-scaffolded HR complex containing BRCA2 and RAD51C and which is thought to play a role in DNA repair by HR. Plays a role in regulating mitochondrial DNA copy number under conditions of oxidative stress in the presence of RAD51 and RAD51C. This is DNA repair protein XRCC3 (XRCC3) from Bos taurus (Bovine).